The chain runs to 178 residues: MLDAFSRKAVSADSSGAFIGGGELASLKSFIADGNKRLDAVNALSSNAACIVSDAVAGICCENTGLTAPNGGVYTNRKMAACLRDGEIVLRYVSYALLAGDASVLQDRCLNGLRETYAALGVPTGSAARAVAIMKAASAALITNTNSQPKKAAVTQGDCSSLAGEAGSYFDAVISAIS.

Positions 50 and 61 each coordinate phycourobilin. Residues Cys-82 and Cys-159 each contribute to the (2R,3E)-phycoerythrobilin site.

The protein belongs to the phycobiliprotein family. In terms of assembly, heterodimer of an alpha and a beta chain. In terms of processing, contains two covalently linked phycoerythrobilin chromophores and one covalently linked phycourobilin chromophore.

Its subcellular location is the cellular thylakoid membrane. Light-harvesting photosynthetic bile pigment-protein from the phycobiliprotein complex. This is C-phycoerythrin class 2 subunit beta (mpeB) from Synechococcus sp. (strain WH8020).